The following is a 411-amino-acid chain: MPGQISAVAVLFLSLTVILHGYQIREKEFPKARGYLQYTATSAEQITTKPLLQLINQRSHITLASRFKDDYIQMAAETSAIENTAHITMKTVTPVTTKSLPPISSASYTFVRSNNAHMTASSTDDTIGSGSIAHLPVPTTRASLAIVNYITGRATQLGGQTTLPKTFFTASHKSTTNQRPTLSTNVLGTSTPTHKDRSTTSPVPLVPRPTLVTWSSPAKIGTYEVLNGSRLCIKAEMGLALIVQEKDLDSATQRYFNIDPSLTHASGKCDSQKSNLFLNFQGGSVNITFTKEENLYYISEVGAYLTISNTEKTYQGKKNTLMMFETVVGHSFKCVSEQSIQLSAQLQMKTMNIHLQAFDFEGDSFGNVNECLSDYTVVLPMVAIIVVVICVVGLSVYKIRQRHQSSAYQRI.

The first 21 residues, 1-21, serve as a signal peptide directing secretion; sequence MPGQISAVAVLFLSLTVILHG. Over 22 to 376 the chain is Lumenal; sequence YQIREKEFPK…NVNECLSDYT (355 aa). Residues 172–192 show a composition bias toward polar residues; sequence HKSTTNQRPTLSTNVLGTSTP. The disordered stretch occupies residues 172–204; it reads HKSTTNQRPTLSTNVLGTSTPTHKDRSTTSPVP. Asn-227 is a glycosylation site (N-linked (GlcNAc...) asparagine). 2 disulfides stabilise this stretch: Cys-232–Cys-269 and Cys-334–Cys-371. Residues 377 to 397 form a helical membrane-spanning segment; sequence VVLPMVAIIVVVICVVGLSVY. The Cytoplasmic segment spans residues 398 to 411; that stretch reads KIRQRHQSSAYQRI.

The protein belongs to the LAMP family. As to quaternary structure, monomer. Interacts with FURIN.

It is found in the cell surface. The protein localises to the lysosome membrane. The protein resides in the cytoplasmic vesicle membrane. It localises to the early endosome membrane. Its function is as follows. Lysosomal membrane glycoprotein which plays a role in the unfolded protein response (UPR) that contributes to protein degradation and cell survival during proteasomal dysfunction. Plays a role in the process of fusion of the lysosome with the autophagosome, thereby modulating the autophagic process. Promotes hepatocellular lipogenesis through activation of the PI3K/Akt pathway. May also play a role in dendritic cell function and in adaptive immunity. This Mus musculus (Mouse) protein is Lysosome-associated membrane glycoprotein 3 (Lamp3).